The sequence spans 169 residues: MNIGLALIPSKSFQDEVNGYRKRYDTEYARIMPHITIKSHFEINDDELDSVKEEVKKRLEGFGPVDVHATKASSFKPTNNVIYFKVAKTDELEQLFNLFNTEDFHGEAEHPFVPHFTIAQGLTSQEFEDIFGQVELVGVDLKEKIEELSLLRYDEEEDKWKVIDTFKLA.

Catalysis depends on His-34, which acts as the Proton donor. Short sequence motifs (HXTX) lie at residues 34–37 (HITI) and 115–118 (HFTI). Residue His-115 is the Proton acceptor of the active site.

This sequence belongs to the 2H phosphoesterase superfamily. YjcG family.

This Staphylococcus haemolyticus (strain JCSC1435) protein is Putative phosphoesterase SH1944.